The chain runs to 409 residues: NADH-quinone oxidoreductase subunit D (409 aa).

The protein belongs to the complex I 49 kDa subunit family. In terms of assembly, NDH-1 is composed of 14 different subunits. Subunits NuoB, C, D, E, F, and G constitute the peripheral sector of the complex.

It localises to the cell inner membrane. It carries out the reaction a quinone + NADH + 5 H(+)(in) = a quinol + NAD(+) + 4 H(+)(out). NDH-1 shuttles electrons from NADH, via FMN and iron-sulfur (Fe-S) centers, to quinones in the respiratory chain. The immediate electron acceptor for the enzyme in this species is believed to be ubiquinone. Couples the redox reaction to proton translocation (for every two electrons transferred, four hydrogen ions are translocated across the cytoplasmic membrane), and thus conserves the redox energy in a proton gradient. The protein is NADH-quinone oxidoreductase subunit D of Helicobacter hepaticus (strain ATCC 51449 / 3B1).